The primary structure comprises 390 residues: Mannitol-1-phosphate 5-dehydrogenase (390 aa).

An NAD(+)-binding site is contributed by 3–14; the sequence is ALHFGAGNIGRG.

It belongs to the mannitol dehydrogenase family.

It carries out the reaction D-mannitol 1-phosphate + NAD(+) = beta-D-fructose 6-phosphate + NADH + H(+). In Buchnera aphidicola subsp. Baizongia pistaciae (strain Bp), this protein is Mannitol-1-phosphate 5-dehydrogenase.